The primary structure comprises 432 residues: Glutamyl-tRNA reductase (432 aa).

Substrate is bound by residues 55–58 (TCNR), S114, 119–121 (ETQ), and Q125. C56 acts as the Nucleophile in catalysis. 194-199 (GAGEMI) contributes to the NADP(+) binding site.

This sequence belongs to the glutamyl-tRNA reductase family. In terms of assembly, homodimer.

It catalyses the reaction (S)-4-amino-5-oxopentanoate + tRNA(Glu) + NADP(+) = L-glutamyl-tRNA(Glu) + NADPH + H(+). It functions in the pathway porphyrin-containing compound metabolism; protoporphyrin-IX biosynthesis; 5-aminolevulinate from L-glutamyl-tRNA(Glu): step 1/2. Its function is as follows. Catalyzes the NADPH-dependent reduction of glutamyl-tRNA(Glu) to glutamate 1-semialdehyde (GSA). The polypeptide is Glutamyl-tRNA reductase (Burkholderia pseudomallei (strain 1710b)).